A 148-amino-acid polypeptide reads, in one-letter code: Large ribosomal subunit protein uL13 (148 aa).

This sequence belongs to the universal ribosomal protein uL13 family. In terms of assembly, part of the 50S ribosomal subunit.

Its function is as follows. This protein is one of the early assembly proteins of the 50S ribosomal subunit, although it is not seen to bind rRNA by itself. It is important during the early stages of 50S assembly. The chain is Large ribosomal subunit protein uL13 from Lacticaseibacillus casei (strain BL23) (Lactobacillus casei).